Reading from the N-terminus, the 501-residue chain is 2,3-bisphosphoglycerate-independent phosphoglycerate mutase (501 aa).

The Mn(2+) site is built by aspartate 12 and serine 62. The active-site Phosphoserine intermediate is serine 62. Residues histidine 121, 150–151 (RD), arginine 182, arginine 188, 253–256 (RSDR), and lysine 322 contribute to the substrate site. Residues aspartate 389, histidine 393, aspartate 430, histidine 431, and histidine 449 each coordinate Mn(2+).

Belongs to the BPG-independent phosphoglycerate mutase family. Monomer. It depends on Mn(2+) as a cofactor.

The enzyme catalyses (2R)-2-phosphoglycerate = (2R)-3-phosphoglycerate. It functions in the pathway carbohydrate degradation; glycolysis; pyruvate from D-glyceraldehyde 3-phosphate: step 3/5. Functionally, catalyzes the interconversion of 2-phosphoglycerate and 3-phosphoglycerate. In Ehrlichia ruminantium (strain Welgevonden), this protein is 2,3-bisphosphoglycerate-independent phosphoglycerate mutase.